The chain runs to 550 residues: Probable endochitinase (550 aa).

An N-terminal signal peptide occupies residues 1–16 (MLHYLATILWLAVAHA). Residues Asn-146 and Asn-172 are each glycosylated (N-linked (GlcNAc...) asparagine; by host). The region spanning 147–547 (KTVAAYFVEW…NAMNERVRVK (401 aa)) is the GH18 domain. The Proton donor role is filled by Glu-304. N-linked (GlcNAc...) asparagine; by host glycosylation is present at Asn-344. The Prevents secretion from ER signature appears at 547–550 (KDEL).

This sequence belongs to the glycosyl hydrolase 18 family. Chitinase class II subfamily.

It localises to the host endoplasmic reticulum lumen. It carries out the reaction Random endo-hydrolysis of N-acetyl-beta-D-glucosaminide (1-&gt;4)-beta-linkages in chitin and chitodextrins.. The polypeptide is Probable endochitinase (Orgyia pseudotsugata (Douglas-fir tussock moth)).